Consider the following 138-residue polypeptide: Phospholipase A2 homolog (138 aa).

Residues 1 to 16 form the signal peptide; the sequence is MRALWIVAVWLIGVEG. Disulfide bonds link Cys-42–Cys-131, Cys-44–Cys-60, Cys-59–Cys-111, Cys-65–Cys-138, Cys-66–Cys-104, Cys-73–Cys-97, and Cys-91–Cys-102. Residues 121-133 form an important for membrane-damaging activities in eukaryotes and bacteria; heparin-binding region; the sequence is KKYTYYPNFLCKG.

Belongs to the phospholipase A2 family. Group II subfamily. S49 sub-subfamily. As to quaternary structure, monomer. In terms of tissue distribution, expressed by the venom gland.

It is found in the secreted. In terms of biological role, snake venom phospholipase A2 homolog that lacks enzymatic activity. Shows high myotoxin activities and displays edema-inducing activities. Has cytotoxic activities against HUVEC cells (LC(50)=5.0 uL) and human lung adenocarcinoma A549 cells (LC(50)=5.2 uL). This is Phospholipase A2 homolog from Echis ocellatus (Ocellated saw-scaled viper).